A 285-amino-acid chain; its full sequence is Shikimate dehydrogenase (NADP(+)) (285 aa).

Residues 22–24 and Thr-69 contribute to the shikimate site; that span reads SMS. Lys-73 (proton acceptor) is an active-site residue. Asp-85 provides a ligand contact to NADP(+). Shikimate is bound by residues Asn-94 and Asp-110. Residues 136–140, 160–165, and Met-225 each bind NADP(+); these read GAGGA and NRTVAR. Tyr-227 is a binding site for shikimate. Gly-248 contributes to the NADP(+) binding site.

The protein belongs to the shikimate dehydrogenase family. In terms of assembly, homodimer.

It catalyses the reaction shikimate + NADP(+) = 3-dehydroshikimate + NADPH + H(+). It functions in the pathway metabolic intermediate biosynthesis; chorismate biosynthesis; chorismate from D-erythrose 4-phosphate and phosphoenolpyruvate: step 4/7. Its function is as follows. Involved in the biosynthesis of the chorismate, which leads to the biosynthesis of aromatic amino acids. Catalyzes the reversible NADPH linked reduction of 3-dehydroshikimate (DHSA) to yield shikimate (SA). The chain is Shikimate dehydrogenase (NADP(+)) from Caulobacter vibrioides (strain ATCC 19089 / CIP 103742 / CB 15) (Caulobacter crescentus).